The following is a 99-amino-acid chain: Large ribosomal subunit protein bL25 (99 aa).

This sequence belongs to the bacterial ribosomal protein bL25 family. In terms of assembly, part of the 50S ribosomal subunit; part of the 5S rRNA/L5/L18/L25 subcomplex. Contacts the 5S rRNA. Binds to the 5S rRNA independently of L5 and L18.

This is one of the proteins that binds to the 5S RNA in the ribosome where it forms part of the central protuberance. This chain is Large ribosomal subunit protein bL25, found in Nostoc sp. (strain PCC 7120 / SAG 25.82 / UTEX 2576).